The following is a 511-amino-acid chain: 60 kDa neurofilament protein (511 aa).

The interval 1 to 32 is disordered; it reads MSVTQKKTEISTTTTYEGESRPSSGMSGFSYS. Residues 1-99 are head; the sequence is MSVTQKKTEI…KANREREKQD (99 aa). Residues 21-30 are compositionally biased toward polar residues; it reads RPSSGMSGFS. The IF rod domain occupies 96 to 449; that stretch reads EKQDMRDLNE…KLLEGEESRV (354 aa). The segment at 100–135 is coil 1A; that stretch reads MRDLNERFANYIEKVRFLEAQNKKLAGELEELKSKW. The tract at residues 136-145 is linker 1; sequence GKETSAIKEM. The coil 1B stretch occupies residues 146–284; that stretch reads YETELEEARK…VHAQELKELA (139 aa). The tract at residues 285–303 is linker 12; the sequence is ALAYRDTTAENREFWRNEL. The segment at 304–449 is coil 2; it reads AQAIRDIQQE…KLLEGEESRV (146 aa). The segment at 450 to 511 is tail; sequence GMKQIVEQVV…EEKKSMGSSD (62 aa). The tract at residues 479–511 is disordered; it reads GYEATGGITTTTTTSSQERRSMSEEKKSMGSSD. The segment covering 483 to 492 has biased composition (low complexity); it reads TGGITTTTTT. Residues 495–511 are compositionally biased toward basic and acidic residues; it reads QERRSMSEEKKSMGSSD.

The protein belongs to the intermediate filament family.

Its function is as follows. Major squid neurofilament protein. The polypeptide is 60 kDa neurofilament protein (Doryteuthis pealeii (Longfin inshore squid)).